The following is a 398-amino-acid chain: KiSS-1 receptor (398 aa).

Residues Met-1–Pro-46 lie on the Extracellular side of the membrane. Residues Asn-10, Asn-18, and Asn-28 are each glycosylated (N-linked (GlcNAc...) asparagine). The helical transmembrane segment at Leu-47–Ile-67 threads the bilayer. At Cys-68–Asn-78 the chain is on the cytoplasmic side. Residues Phe-79 to Leu-101 form a helical membrane-spanning segment. Residues Leu-102 to Tyr-120 are Extracellular-facing. A disulfide bridge links Cys-115 with Cys-191. Residues Ile-121 to Val-138 form a helical membrane-spanning segment. Residues Asp-139–Arg-157 are Cytoplasmic-facing. A helical membrane pass occupies residues Leu-158 to Leu-178. At Ala-179–Arg-202 the chain is on the extracellular side. A helical membrane pass occupies residues Ala-203 to Cys-223. Residues Tyr-224–Arg-263 are Cytoplasmic-facing. Residues Leu-264–Val-284 form a helical membrane-spanning segment. Over Leu-285–Lys-305 the chain is Extracellular. Residues Thr-306–Ser-328 traverse the membrane as a helical segment. Residues His-329 to Leu-398 lie on the Cytoplasmic side of the membrane. The segment at Ala-341–Leu-363 is disordered.

It belongs to the G-protein coupled receptor 1 family. Most highly expressed in the pancreas, placenta and spinal cord, with lower-level of expression in peripheral blood leukocytes, kidney, lung, fetal liver, stomach, small intestine, testes, spleen, thymus, adrenal glands and lymph nodes. In the adult brain, expressed in the superior frontal gyrus, putamen, caudate nucleus, cingulate gyrus, nucleus accumbens, hippocampus, pons and amygdala, as well as the hypothalamus and pituitary. Expression levels are higher in early (7-9 weeks) than term placentas. Expression levels were increased in both early placentas and molar pregnancies and were reduced in choriocarcinoma cells. Expressed at higher levels in first trimester trophoblasts than at term of gestation. Also found in the extravillous trophoblast suggesting endocrine/paracrine activation mechanism.

The protein resides in the cell membrane. Its function is as follows. Receptor for metastin (kisspeptin-54 or kp-54), a C-terminally amidated peptide of KiSS1. KiSS1 is a metastasis suppressor protein that suppresses metastases in malignant melanomas and in some breast carcinomas without affecting tumorigenicity. The metastasis suppressor properties may be mediated in part by cell cycle arrest and induction of apoptosis in malignant cells. The receptor is essential for normal gonadotropin-released hormone physiology and for puberty. The hypothalamic KiSS1/KISS1R system is a pivotal factor in central regulation of the gonadotropic axis at puberty and in adulthood. The receptor is also probably involved in the regulation and fine-tuning of trophoblast invasion generated by the trophoblast itself. Analysis of the transduction pathways activated by the receptor identifies coupling to phospholipase C and intracellular calcium release through pertussis toxin-insensitive G(q) proteins. The protein is KiSS-1 receptor (KISS1R) of Homo sapiens (Human).